The sequence spans 587 residues: Mitogen-activated protein kinase 4 (587 aa).

The Protein kinase domain maps to 20-312 (FVDFQPLGFG…AEMGLQHPYM (293 aa)). Residues 26–34 (LGFGVNGLV) and lysine 49 contribute to the ATP site. Residue aspartate 149 is the Proton acceptor of the active site. Position 186 is a phosphoserine; by PAK1, PAK2 and PAK3 (serine 186). The SEG motif motif lies at 186–188 (SEG). The FRIEDE motif signature appears at 328-333 (FRIEDE). Basic and acidic residues-rich tracts occupy residues 373 to 383 (QDASEVQRDPR) and 395 to 413 (VDPR…EQSH). A disordered region spans residues 373 to 413 (QDASEVQRDPRAGSAPLAEDVQVDPRKDSHSSSERFLEQSH). The residue at position 434 (serine 434) is a Phosphoserine. The disordered stretch occupies residues 499-534 (STQGGPEHASPPADDPERRLSASPPGRPAPVDGGAS).

The protein belongs to the protein kinase superfamily. CMGC Ser/Thr protein kinase family. MAP kinase subfamily. As to quaternary structure, homodimer. Heterodimer with ERK3/MAPK6. Interacts with (via FRIEDE motif) MAPKAPK5. Requires Mg(2+) as cofactor. Post-translationally, phosphorylated at Ser-186 by PAK1, PAK2 and PAK3 resulting in catalytic activation. Phosphorylated by MAPKAPK5 at other sites. In terms of tissue distribution, high expression in heart and brain.

It localises to the cytoplasm. The protein resides in the nucleus. It carries out the reaction L-seryl-[protein] + ATP = O-phospho-L-seryl-[protein] + ADP + H(+). The enzyme catalyses L-threonyl-[protein] + ATP = O-phospho-L-threonyl-[protein] + ADP + H(+). Its activity is regulated as follows. Activated by phosphorylation at Ser-186. Functionally, atypical MAPK protein. Phosphorylates microtubule-associated protein 2 (MAP2) and MAPKAPK5. The precise role of the complex formed with MAPKAPK5 is still unclear, but the complex follows a complex set of phosphorylation events: upon interaction with atypical MAPKAPK5, ERK4/MAPK4 is phosphorylated at Ser-186 and then mediates phosphorylation and activation of MAPKAPK5, which in turn phosphorylates ERK4/MAPK4. May promote entry in the cell cycle. The chain is Mitogen-activated protein kinase 4 (MAPK4) from Homo sapiens (Human).